A 291-amino-acid chain; its full sequence is tRNA dimethylallyltransferase (291 aa).

An ATP-binding site is contributed by 9–16 (GPTASGKT). 11 to 16 (TASGKT) is a substrate binding site. The tract at residues 34–37 (DSLQ) is interaction with substrate tRNA.

This sequence belongs to the IPP transferase family. Monomer. Requires Mg(2+) as cofactor.

It catalyses the reaction adenosine(37) in tRNA + dimethylallyl diphosphate = N(6)-dimethylallyladenosine(37) in tRNA + diphosphate. Catalyzes the transfer of a dimethylallyl group onto the adenine at position 37 in tRNAs that read codons beginning with uridine, leading to the formation of N6-(dimethylallyl)adenosine (i(6)A). This is tRNA dimethylallyltransferase from Aster yellows witches'-broom phytoplasma (strain AYWB).